The following is a 1020-amino-acid chain: DNA-directed RNA polymerase 2, chloroplastic/mitochondrial (1020 aa).

Residues lysine 314–lysine 336 form a disordered region. Catalysis depends on residues aspartate 721, lysine 796, and aspartate 953.

The protein belongs to the phage and mitochondrial RNA polymerase family. As to expression, the highest levels of expression are detected in the mature leaves. The level of expression is lowest in the cotyledons.

The protein resides in the plastid. Its subcellular location is the chloroplast. It is found in the mitochondrion. The enzyme catalyses RNA(n) + a ribonucleoside 5'-triphosphate = RNA(n+1) + diphosphate. Functionally, DNA-dependent RNA polymerase catalyzes the transcription of DNA into RNA using the four ribonucleoside triphosphates as substrates. This chain is DNA-directed RNA polymerase 2, chloroplastic/mitochondrial (RPOT2), found in Nicotiana sylvestris (Wood tobacco).